The primary structure comprises 472 residues: Methanethiol oxidase (472 aa).

The protein belongs to the selenium-binding protein family.

The protein resides in the nucleus. It localises to the cytoplasm. The protein localises to the cytosol. Its subcellular location is the membrane. The catalysed reaction is methanethiol + O2 + H2O = hydrogen sulfide + formaldehyde + H2O2 + H(+). It functions in the pathway organosulfur degradation. Its function is as follows. Catalyzes the oxidation of methanethiol, an organosulfur compound known to be produced in substantial amounts by gut bacteria. Selenium-binding protein which may be involved in the sensing of reactive xenobiotics in the cytoplasm. May be involved in intra-Golgi protein transport. The polypeptide is Methanethiol oxidase (selenbp1) (Xenopus tropicalis (Western clawed frog)).